The primary structure comprises 121 residues: Large ribosomal subunit protein bL19 (121 aa).

This sequence belongs to the bacterial ribosomal protein bL19 family.

Its function is as follows. This protein is located at the 30S-50S ribosomal subunit interface and may play a role in the structure and function of the aminoacyl-tRNA binding site. In Chlorobaculum tepidum (strain ATCC 49652 / DSM 12025 / NBRC 103806 / TLS) (Chlorobium tepidum), this protein is Large ribosomal subunit protein bL19.